The primary structure comprises 157 residues: Arginine repressor (157 aa).

Belongs to the ArgR family.

It is found in the cytoplasm. The protein operates within amino-acid biosynthesis; L-arginine biosynthesis [regulation]. Regulates arginine biosynthesis genes. This chain is Arginine repressor, found in Lactobacillus delbrueckii subsp. bulgaricus (strain ATCC 11842 / DSM 20081 / BCRC 10696 / JCM 1002 / NBRC 13953 / NCIMB 11778 / NCTC 12712 / WDCM 00102 / Lb 14).